Reading from the N-terminus, the 950-residue chain is Leucine--tRNA ligase 2 (950 aa).

Residues 47 to 57 (PYPNSPFHLGH) carry the 'HIGH' region motif. The 'KMSKS' region motif lies at 631–635 (KMSKS). Residue Lys634 participates in ATP binding.

The protein belongs to the class-I aminoacyl-tRNA synthetase family.

The protein resides in the cytoplasm. The catalysed reaction is tRNA(Leu) + L-leucine + ATP = L-leucyl-tRNA(Leu) + AMP + diphosphate. The protein is Leucine--tRNA ligase 2 of Metallosphaera sedula (strain ATCC 51363 / DSM 5348 / JCM 9185 / NBRC 15509 / TH2).